A 202-amino-acid polypeptide reads, in one-letter code: Inner membrane-spanning protein YciB (202 aa).

The next 5 helical transmembrane spans lie at 47 to 67 (ILLA…WVHF), 75 to 95 (MLWV…AFQN), 101 to 121 (WKPT…AFIL), 146 to 166 (LSWI…AFNF), and 174 to 194 (FKLF…GMLL).

Belongs to the YciB family.

It localises to the cell inner membrane. In terms of biological role, plays a role in cell envelope biogenesis, maintenance of cell envelope integrity and membrane homeostasis. The polypeptide is Inner membrane-spanning protein YciB (Dechloromonas aromatica (strain RCB)).